The primary structure comprises 327 residues: tRNA uridine(34) hydroxylase (327 aa).

Positions 123 to 217 constitute a Rhodanese domain; sequence SDPEVLLVDT…YLEEVKQEES (95 aa). Cysteine 177 serves as the catalytic Cysteine persulfide intermediate.

Belongs to the TrhO family.

It carries out the reaction uridine(34) in tRNA + AH2 + O2 = 5-hydroxyuridine(34) in tRNA + A + H2O. In terms of biological role, catalyzes oxygen-dependent 5-hydroxyuridine (ho5U) modification at position 34 in tRNAs. In Shewanella piezotolerans (strain WP3 / JCM 13877), this protein is tRNA uridine(34) hydroxylase.